Reading from the N-terminus, the 118-residue chain is Holo-[acyl-carrier-protein] synthase (118 aa).

Positions 8 and 50 each coordinate Mg(2+).

The protein belongs to the P-Pant transferase superfamily. AcpS family. Mg(2+) is required as a cofactor.

Its subcellular location is the cytoplasm. It catalyses the reaction apo-[ACP] + CoA = holo-[ACP] + adenosine 3',5'-bisphosphate + H(+). Transfers the 4'-phosphopantetheine moiety from coenzyme A to a Ser of acyl-carrier-protein. This is Holo-[acyl-carrier-protein] synthase from Leifsonia xyli subsp. xyli (strain CTCB07).